The primary structure comprises 175 residues: Pituitary adenylate cyclase-activating polypeptide (175 aa).

The N-terminal stretch at 1–24 (MTMCSGARLALLVYGIIMHSSVSC) is a signal peptide. Residues 25-78 (SPAAGLSFPGIRPEDEAYDQDGNPLQDFYDWDPPGVGSPASALRDAYALYYPAD) constitute a propeptide that is removed on maturation. Residues 149–157 (VKKYLAAVL) form an important for receptor binding region. Position 157 is a leucine amide (Leu-157). A Lysine amide modification is found at Lys-168. A propeptide spanning residues 172–175 (IAYL) is cleaved from the precursor.

It belongs to the glucagon family.

The protein localises to the secreted. Functionally, PACAP is a neuropeptide involved in diverse array of physiological processes through activating the PACAP subfamily of class B1 G protein-coupled receptors: VIP receptor 1 (VIPR1), VIP receptor 2 (VIPR2), and PACAP type I receptor (ADCYAP1R1). Exerts neuroprotective and general cytoprotective effects due to anti-apoptotic, anti-inflammatory, and antioxidant actions. Promotes neuron projection development through the RAPGEF2/Rap1/B-Raf/ERK pathway. In chromaffin cells, induces long-lasting increase of intracellular calcium concentrations and neuroendocrine secretion. Involved in the control of glucose homeostasis, induces insulin secretion by pancreatic beta cells. PACAP exists in two bioactive forms from proteolysis of the same precursor protein, PACAP27 and PACAP38, which differ by eleven amino acid residues in the C-terminus. The polypeptide is Pituitary adenylate cyclase-activating polypeptide (Mus musculus (Mouse)).